A 266-amino-acid polypeptide reads, in one-letter code: Apolipoprotein A-I (266 aa).

An N-terminal signal peptide occupies residues 1–18 (MKAVVLTLAVLFLTGSQA). A run of 2 repeats spans residues 67–88 (LKLLDNWDSLSSTVAKLREQIG) and 89–110 (PVTQEFWDNLEKETEVLRQEMN). Residues 67 to 266 (LKLLDNWDSL…DEATKKLNSQ (200 aa)) form a 10 X approximate tandem repeats region. Met109 carries the post-translational modification Methionine sulfoxide. The stretch at 111–121 (KDLEEVKKKVQ) is one 3; half-length repeat. Tandem repeats lie at residues 122–143 (PYLDEFQSKWHEEVELYRQKVA), 144–165 (PLGAELREGARQKLQELQEKLS), 166–187 (PLGEELRDRARTHVDALRAQLA), 188–209 (PYGEQLRERLAARLQALKEGGG), and 210–231 (AALTEYRAKASEHLSALREKAK). The 9; half-length repeat unit spans residues 232-242 (PALEDLRQGLL). Repeat 10 spans residues 243-266 (PVLENFRVSLLAAVDEATKKLNSQ).

Belongs to the apolipoprotein A1/A4/E family. As to quaternary structure, homodimer. Interacts with APOA1BP and CLU. Component of a sperm activating protein complex (SPAP), consisting of APOA1, an immunoglobulin heavy chain, an immunoglobulin light chain and albumin. Interacts with NDRG1. Interacts with SCGB3A2. Interacts with NAXE and YJEFN3. Glycosylated. Post-translationally, palmitoylated. In terms of processing, phosphorylation sites are present in the extracellular medium.

The protein localises to the secreted. In terms of biological role, participates in the reverse transport of cholesterol from tissues to the liver for excretion by promoting cholesterol efflux from tissues and by acting as a cofactor for the lecithin cholesterol acyltransferase (LCAT). As part of the SPAP complex, activates spermatozoa motility. The chain is Apolipoprotein A-I (APOA1) from Leptonychotes weddellii (Weddell seal).